The following is a 303-amino-acid chain: Propanal dehydrogenase (CoA-propanoylating) (303 aa).

12 to 15 (SGNI) serves as a coordination point for NAD(+). Cys-127 functions as the Acyl-thioester intermediate in the catalytic mechanism. NAD(+) contacts are provided by residues 158–166 (SAGPGTRAN) and Asn-277.

The protein belongs to the acetaldehyde dehydrogenase family. As to quaternary structure, monomer. Forms a heterotetramer composed of two aldolase (HsaF) and two dehydrogenase (HsaG) subunits.

It catalyses the reaction propanal + NAD(+) + CoA = propanoyl-CoA + NADH + H(+). It carries out the reaction acetaldehyde + NAD(+) + CoA = acetyl-CoA + NADH + H(+). Its function is as follows. Involved in cholesterol degradation. Catalyzes the conversion of propanal to propanoyl-CoA, using NAD(+) and coenzyme A. This Mycobacterium bovis (strain ATCC BAA-935 / AF2122/97) protein is Propanal dehydrogenase (CoA-propanoylating).